The following is a 452-amino-acid chain: Pup--protein ligase (452 aa).

Position 9 (Glu9) interacts with Mg(2+). Arg53 lines the ATP pocket. Residue Tyr55 participates in Mg(2+) binding. Asp57 acts as the Proton acceptor in catalysis. Glu63 contacts Mg(2+). Positions 66 and 419 each coordinate ATP.

The protein belongs to the Pup ligase/Pup deamidase family. Pup-conjugating enzyme subfamily.

It carries out the reaction ATP + [prokaryotic ubiquitin-like protein]-L-glutamate + [protein]-L-lysine = ADP + phosphate + N(6)-([prokaryotic ubiquitin-like protein]-gamma-L-glutamyl)-[protein]-L-lysine.. The protein operates within protein degradation; proteasomal Pup-dependent pathway. It functions in the pathway protein modification; protein pupylation. Its function is as follows. Catalyzes the covalent attachment of the prokaryotic ubiquitin-like protein modifier Pup to the proteasomal substrate proteins, thereby targeting them for proteasomal degradation. This tagging system is termed pupylation. The ligation reaction involves the side-chain carboxylate of the C-terminal glutamate of Pup and the side-chain amino group of a substrate lysine. This Nakamurella multipartita (strain ATCC 700099 / DSM 44233 / CIP 104796 / JCM 9543 / NBRC 105858 / Y-104) (Microsphaera multipartita) protein is Pup--protein ligase.